The sequence spans 350 residues: Major allergen Mal f 1 (350 aa).

A signal peptide spans 1-22 (MRYSTVLAALALLGTSAVSVLA).

Its subcellular location is the secreted. The protein localises to the cell wall. This is Major allergen Mal f 1 from Malassezia furfur (Pityriasis versicolor infection agent).